We begin with the raw amino-acid sequence, 206 residues long: Transcription antitermination protein NusB (206 aa).

Residues 135–206 (ARGEKTSAQE…ETQPPGVNEV (72 aa)) are disordered. Positions 169 to 180 (ATPATTPVTTTV) are enriched in low complexity.

It belongs to the NusB family.

In terms of biological role, involved in transcription antitermination. Required for transcription of ribosomal RNA (rRNA) genes. Binds specifically to the boxA antiterminator sequence of the ribosomal RNA (rrn) operons. In Heliobacterium modesticaldum (strain ATCC 51547 / Ice1), this protein is Transcription antitermination protein NusB.